A 56-amino-acid chain; its full sequence is Large ribosomal subunit protein bL32 (56 aa).

The disordered stretch occupies residues 1–37; sequence MAVQQNKKSRSRRDMRRSHDALTTAAVSVDKTTGETH. Over residues 7 to 16 the composition is skewed to basic residues; the sequence is KKSRSRRDMR.

It belongs to the bacterial ribosomal protein bL32 family.

This chain is Large ribosomal subunit protein bL32, found in Haemophilus ducreyi (strain 35000HP / ATCC 700724).